A 208-amino-acid polypeptide reads, in one-letter code: Small ribosomal subunit protein uS4 (208 aa).

The 64-residue stretch at 98–161 (RRLDNVIYRL…RKIPVIAEAQ (64 aa)) folds into the S4 RNA-binding domain.

This sequence belongs to the universal ribosomal protein uS4 family. As to quaternary structure, part of the 30S ribosomal subunit. Contacts protein S5. The interaction surface between S4 and S5 is involved in control of translational fidelity.

Functionally, one of the primary rRNA binding proteins, it binds directly to 16S rRNA where it nucleates assembly of the body of the 30S subunit. Its function is as follows. With S5 and S12 plays an important role in translational accuracy. This chain is Small ribosomal subunit protein uS4, found in Nitratidesulfovibrio vulgaris (strain DSM 19637 / Miyazaki F) (Desulfovibrio vulgaris).